A 155-amino-acid chain; its full sequence is NADPH-dependent 7-cyano-7-deazaguanine reductase (155 aa).

Cys53 serves as the catalytic Thioimide intermediate. The Proton donor role is filled by Asp60. Residues 75–77 (VES) and 94–95 (HE) contribute to the substrate site.

The protein belongs to the GTP cyclohydrolase I family. QueF type 1 subfamily.

It localises to the cytoplasm. The enzyme catalyses 7-aminomethyl-7-carbaguanine + 2 NADP(+) = 7-cyano-7-deazaguanine + 2 NADPH + 3 H(+). It functions in the pathway tRNA modification; tRNA-queuosine biosynthesis. Catalyzes the NADPH-dependent reduction of 7-cyano-7-deazaguanine (preQ0) to 7-aminomethyl-7-deazaguanine (preQ1). This is NADPH-dependent 7-cyano-7-deazaguanine reductase from Hyphomonas neptunium (strain ATCC 15444).